The primary structure comprises 397 residues: Acetate kinase (397 aa).

Residue Asn-7 participates in Mg(2+) binding. Lys-14 contacts ATP. Position 90 (Arg-90) interacts with substrate. Catalysis depends on Asp-147, which acts as the Proton donor/acceptor. Residues 207–211 (HLGNG), 282–284 (DFR), and 330–334 (GLGEN) each bind ATP. Glu-383 is a binding site for Mg(2+).

This sequence belongs to the acetokinase family. In terms of assembly, homodimer. The cofactor is Mg(2+). Mn(2+) is required as a cofactor.

The protein localises to the cytoplasm. The catalysed reaction is acetate + ATP = acetyl phosphate + ADP. The protein operates within metabolic intermediate biosynthesis; acetyl-CoA biosynthesis; acetyl-CoA from acetate: step 1/2. Catalyzes the formation of acetyl phosphate from acetate and ATP. Can also catalyze the reverse reaction. The chain is Acetate kinase from Clostridium botulinum (strain ATCC 19397 / Type A).